A 100-amino-acid polypeptide reads, in one-letter code: Small ribosomal subunit protein uS14c (100 aa).

It belongs to the universal ribosomal protein uS14 family. Part of the 30S ribosomal subunit.

It localises to the plastid. Binds 16S rRNA, required for the assembly of 30S particles. The chain is Small ribosomal subunit protein uS14c from Cuscuta exaltata (Tall dodder).